Here is a 27-residue protein sequence, read N- to C-terminus: Metalloproteinase inhibitor 1 (27 aa).

The span at 1 to 12 shows a compositional bias: acidic residues; the sequence is IEPERQEEEEEE. The disordered stretch occupies residues 1–27; sequence IEPERQEEEEEETRQRVRRGQVRQQQQ.

In terms of biological role, metalloproteinase inhibitor, active on a globulinase from L.albus seeds, thermolysin and gelatinase B. In Lupinus albus (White lupine), this protein is Metalloproteinase inhibitor 1.